We begin with the raw amino-acid sequence, 153 residues long: Natriuretic peptides A (153 aa).

A signal peptide spans 1-25 (MGPFSTITVSFLFCLAFWHPDQIGA). 2 propeptides span residues 26–123 (NPVY…TAPR) and 93–103 (DGEALGRSTWE). A disordered region spans residues 54 to 101 (EDEAVPPQALSEQSDEAGAALSPLPEVPPWTGEVSPAQRDGEALGRST). Phosphoserine is present on Ser129. Cys130 and Cys146 form a disulfide bridge. Positions 147-151 (NSFRY) are important for degradation of atrial natriuretic peptide by IDE.

Belongs to the natriuretic peptide family. In terms of assembly, homodimer; disulfide-linked antiparallel dimer. In terms of processing, the precursor molecule is proteolytically cleaved by CORIN at Arg-123 to produce the atrial natriuretic peptide. Undergoes further proteolytic cleavage by unknown proteases to give rise to long-acting natriuretic peptide, vessel dilator and kaliuretic peptide. Additional processing gives rise to the auriculin and atriopeptin peptides. In the kidneys, alternative processing by an unknown protease results in the peptide urodilatin. Cleavage by MME initiates degradation of the factor and thereby regulates its activity. Degradation by IDE results in reduced activation of NPR1 (in vitro). During IDE degradation, the resulting products can temporarily stimulate NPR2 to produce cGMP, before the fragments are completely degraded and inactivated by IDE (in vitro). Post-translationally, degraded by IDE. In terms of processing, phosphorylation on Ser-129 decreases vasorelaxant activity.

It localises to the secreted. The protein localises to the perikaryon. Its subcellular location is the cell projection. Functionally, hormone that plays a key role in mediating cardio-renal homeostasis, and is involved in vascular remodeling and regulating energy metabolism. Acts by specifically binding and stimulating NPR1 to produce cGMP, which in turn activates effector proteins, such as PRKG1, that drive various biological responses. Regulates vasodilation, natriuresis, diuresis and aldosterone synthesis and is therefore essential for regulating blood pressure, controlling the extracellular fluid volume and maintaining the fluid-electrolyte balance. Also involved in inhibiting cardiac remodeling and cardiac hypertrophy by inducing cardiomyocyte apoptosis and attenuating the growth of cardiomyocytes and fibroblasts. Plays a role in female pregnancy by promoting trophoblast invasion and spiral artery remodeling in uterus, and thus prevents pregnancy-induced hypertension. In adipose tissue, acts in various cGMP- and PKG-dependent pathways to regulate lipid metabolism and energy homeostasis. This includes up-regulating lipid metabolism and mitochondrial oxygen utilization by activating the AMP-activated protein kinase (AMPK), and increasing energy expenditure by acting via MAPK11 to promote the UCP1-dependent thermogenesis of brown adipose tissue. Binds the clearance receptor NPR3 which removes the hormone from circulation. Its function is as follows. May have a role in cardio-renal homeostasis through regulation of natriuresis, diuresis, vasodilation, and inhibiting aldosterone synthesis. In vitro, promotes the production of cGMP and induces vasodilation. May promote natriuresis, at least in part, by enhancing prostaglandin E2 synthesis resulting in the inhibition of renal Na+-K+-ATPase. However reports on the involvement of this peptide in mammal blood volume and blood pressure homeostasis are conflicting; according to a report, in vivo it is not sufficient to activate cGMP and does not inhibit collecting duct transport nor effect diuresis and natriuresis. Appears to bind to specific receptors that are distinct from the receptors bound by atrial natriuretic peptide and vessel dilator. Possibly enhances protein excretion in urine by decreasing proximal tubular protein reabsorption. May have a role in cardio-renal homeostasis through regulation of natriuresis, diuresis, and vasodilation. In vitro, promotes the production of cGMP and induces vasodilation. May promote natriuresis, at least in part, by enhancing prostaglandin E2 synthesis resulting in the inhibition of renal Na+-K+-ATPase. However reports on the involvement of this peptide in mammal blood volume and blood pressure homeostasis are conflicting; according to a report it is not sufficient to activate cGMP and does not inhibit collecting duct transport nor effect diuresis and natriuresis. Appears to bind to specific receptors that are distinct from the receptors bound by the atrial natriuretic and long-acting natriuretic peptides. Possibly functions in protein excretion in urine by maintaining the integrity of the proximal tubules and enhancing protein excretion by decreasing proximal tubular protein reabsorption. In terms of biological role, may have a role in cardio-renal homeostasis through regulation of diuresis and inhibiting aldosterone synthesis. In vitro, promotes the production of cGMP and induces vasodilation. May promote natriuresis, at least in part, by enhancing prostaglandin E2 synthesis resulting in the inhibition of renal Na+-K+-ATPase. May have a role in potassium excretion but not sodium excretion (natriuresis). Possibly enhances protein excretion in urine by decreasing proximal tubular protein reabsorption. Functionally, hormone produced in the kidneys that appears to be important for maintaining cardio-renal homeostasis. Mediates vasodilation, natriuresis and diuresis primarily in the renal system, in order to maintain the extracellular fluid volume and control the fluid-electrolyte balance. Specifically binds and stimulates cGMP production by renal transmembrane receptors, likely NPR1. Urodilatin not ANP, may be the natriuretic peptide responsible for the regulation of sodium and water homeostasis in the kidney. Its function is as follows. May have a role in cardio-renal homeostasis through regulation of natriuresis and vasodilation. In vivo promotes natriuresis and in vitro, vasodilates renal artery strips. May have a role in cardio-renal homeostasis through regulation of regulation of natriuresis and vasodilation. In vivo promotes natriuresis. In vitro, vasodilates intestinal smooth muscle but not smooth muscle strips. In terms of biological role, may have a role in cardio-renal homeostasis through regulation of natriuresis and vasodilation. In vivo promotes natriuresis. In vitro, selectively vasodilates intestinal and vascular smooth muscle strips. Functionally, may have a role in cardio-renal homeostasis through regulation of natriuresis and vasodilation. In vivo promotes natriuresis. In vitro, selectively vasodilates intestinal smooth muscle but not vascular smooth muscle strips. The polypeptide is Natriuretic peptides A (NPPA) (Oryctolagus cuniculus (Rabbit)).